The following is a 448-amino-acid chain: N-succinylarginine dihydrolase (448 aa).

Residues glycine 19–serine 28, asparagine 110, and histidine 137–arginine 138 each bind substrate. Glutamate 174 is an active-site residue. Arginine 214 contributes to the substrate binding site. Histidine 250 is a catalytic residue. Positions 252 and 365 each coordinate substrate. Cysteine 371 serves as the catalytic Nucleophile.

It belongs to the succinylarginine dihydrolase family. In terms of assembly, homodimer.

It carries out the reaction N(2)-succinyl-L-arginine + 2 H2O + 2 H(+) = N(2)-succinyl-L-ornithine + 2 NH4(+) + CO2. It participates in amino-acid degradation; L-arginine degradation via AST pathway; L-glutamate and succinate from L-arginine: step 2/5. Its function is as follows. Catalyzes the hydrolysis of N(2)-succinylarginine into N(2)-succinylornithine, ammonia and CO(2). The polypeptide is N-succinylarginine dihydrolase (Pseudomonas fluorescens (strain SBW25)).